The sequence spans 201 residues: 3-isopropylmalate dehydratase small subunit (201 aa).

The protein belongs to the LeuD family. LeuD type 1 subfamily. In terms of assembly, heterodimer of LeuC and LeuD.

It carries out the reaction (2R,3S)-3-isopropylmalate = (2S)-2-isopropylmalate. The protein operates within amino-acid biosynthesis; L-leucine biosynthesis; L-leucine from 3-methyl-2-oxobutanoate: step 2/4. Functionally, catalyzes the isomerization between 2-isopropylmalate and 3-isopropylmalate, via the formation of 2-isopropylmaleate. This Azorhizobium caulinodans (strain ATCC 43989 / DSM 5975 / JCM 20966 / LMG 6465 / NBRC 14845 / NCIMB 13405 / ORS 571) protein is 3-isopropylmalate dehydratase small subunit.